The sequence spans 208 residues: Small ribosomal subunit protein uS4 (208 aa).

The S4 RNA-binding domain occupies 98-159 (LRLDNVAYRL…AARTHIRIAA (62 aa)).

The protein belongs to the universal ribosomal protein uS4 family. In terms of assembly, part of the 30S ribosomal subunit. Contacts protein S5. The interaction surface between S4 and S5 is involved in control of translational fidelity.

Functionally, one of the primary rRNA binding proteins, it binds directly to 16S rRNA where it nucleates assembly of the body of the 30S subunit. With S5 and S12 plays an important role in translational accuracy. In Acidithiobacillus ferrooxidans (strain ATCC 23270 / DSM 14882 / CIP 104768 / NCIMB 8455) (Ferrobacillus ferrooxidans (strain ATCC 23270)), this protein is Small ribosomal subunit protein uS4.